The following is a 408-amino-acid chain: D-galactonate dehydratase family member OG2516_05608 (408 aa).

Aspartate 215 lines the Mg(2+) pocket. Residue histidine 217 coordinates D-arabinonate. 2 residues coordinate Mg(2+): glutamate 241 and glutamate 267. Residues glutamate 267, arginine 288, histidine 317, and glutamate 344 each contribute to the D-arabinonate site.

Belongs to the mandelate racemase/muconate lactonizing enzyme family. GalD subfamily.

Has no detectable activity with D-mannonate and with a panel of 70 other acid sugars (in vitro), in spite of the conservation of the residues that are expected to be important for catalytic activity and cofactor binding. May have evolved a divergent function. The chain is D-galactonate dehydratase family member OG2516_05608 from Oceanicola granulosus (strain ATCC BAA-861 / DSM 15982 / KCTC 12143 / HTCC2516).